The chain runs to 217 residues: Pyridoxine/pyridoxamine 5'-phosphate oxidase (217 aa).

Substrate-binding positions include 13–16 (RREY) and Lys71. FMN contacts are provided by residues 66–71 (RIVLLK), 81–82 (YT), Arg87, Lys88, and Gln110. Positions 128, 132, and 136 each coordinate substrate. Residues 145–146 (QS) and Trp190 each bind FMN. Substrate is bound at residue 196-198 (RLH). FMN is bound at residue Arg200.

It belongs to the pyridoxamine 5'-phosphate oxidase family. As to quaternary structure, homodimer. The cofactor is FMN.

The catalysed reaction is pyridoxamine 5'-phosphate + O2 + H2O = pyridoxal 5'-phosphate + H2O2 + NH4(+). The enzyme catalyses pyridoxine 5'-phosphate + O2 = pyridoxal 5'-phosphate + H2O2. The protein operates within cofactor metabolism; pyridoxal 5'-phosphate salvage; pyridoxal 5'-phosphate from pyridoxamine 5'-phosphate: step 1/1. It participates in cofactor metabolism; pyridoxal 5'-phosphate salvage; pyridoxal 5'-phosphate from pyridoxine 5'-phosphate: step 1/1. In terms of biological role, catalyzes the oxidation of either pyridoxine 5'-phosphate (PNP) or pyridoxamine 5'-phosphate (PMP) into pyridoxal 5'-phosphate (PLP). The polypeptide is Pyridoxine/pyridoxamine 5'-phosphate oxidase (Yersinia enterocolitica serotype O:8 / biotype 1B (strain NCTC 13174 / 8081)).